Here is a 486-residue protein sequence, read N- to C-terminus: MVALDVLGITDSDAPVYRQKQEADTLVLGTIHPFRKAHRSVLGKLAQEFRLVTSDRRSWKILLFGVLNVVCTGCLLMWCSSTNSMALTAYTYLTIFDLFSLITCLLSLWVTMKKPSQIYSFGFQRFEVLAVFSSTVLVQLGSLFILKESVERFVEQPEVHTGRLLVGTFVALFFNLLTLLSVKNKPFVFVSEAASTSWLQEHVADLSRSLCGLIPALSSFLLPRMNPFVLINLAGAFALGITYMLIEINNYNAMDTASAVAIALMTFGTMYPMSVYSGKVLLQTTPSHVIGQLDKLLREVSTLDGVLEVRNEHFWTIGFGSLAGSVHVRIRRDADEQMVLAHVWNRLSALVSALTVHVFKDEWSRASLSSGVLPSAPLSLSEYVTAAAVFPAAPSRAQGSEPTPATSTPAKPSSPPPEFSFHTPGRHVQPVVFQTAHPHRPLYGGLQGPGVRLGLGPRGPTLQAYRTLSAAPHTYTSGTYTGPPRP.

Topologically, residues 1 to 60 (MVALDVLGITDSDAPVYRQKQEADTLVLGTIHPFRKAHRSVLGKLAQEFRLVTSDRRSWK) are cytoplasmic. The chain crosses the membrane as a helical span at residues 61 to 81 (ILLFGVLNVVCTGCLLMWCSS). Residues 82-91 (TNSMALTAYT) are Extracellular-facing. A helical membrane pass occupies residues 92–112 (YLTIFDLFSLITCLLSLWVTM). Over 113–125 (KKPSQIYSFGFQR) the chain is Cytoplasmic. Residues 126 to 146 (FEVLAVFSSTVLVQLGSLFIL) traverse the membrane as a helical segment. Residues 147–161 (KESVERFVEQPEVHT) lie on the Extracellular side of the membrane. The helical transmembrane segment at 162-182 (GRLLVGTFVALFFNLLTLLSV) threads the bilayer. The Cytoplasmic portion of the chain corresponds to 183–227 (KNKPFVFVSEAASTSWLQEHVADLSRSLCGLIPALSSFLLPRMNP). The chain crosses the membrane as a helical span at residues 228-248 (FVLINLAGAFALGITYMLIEI). Topologically, residues 249-255 (NNYNAMD) are extracellular. Residues 256-276 (TASAVAIALMTFGTMYPMSVY) form a helical membrane-spanning segment. Residues 277–486 (SGKVLLQTTP…SGTYTGPPRP (210 aa)) are Cytoplasmic-facing. Positions 394–411 (PSRAQGSEPTPATSTPAK) are enriched in low complexity. Residues 394-425 (PSRAQGSEPTPATSTPAKPSSPPPEFSFHTPG) are disordered.

Belongs to the cation diffusion facilitator (CDF) transporter (TC 2.A.4) family. SLC30A subfamily. In terms of assembly, heterodimer with SLC30A5; form a functional zinc ion transmembrane transporter.

It is found in the golgi apparatus. It localises to the trans-Golgi network membrane. Functionally, has probably no intrinsic transporter activity but together with SLC30A5 forms a functional zinc ion:proton antiporter heterodimer, mediating zinc entry into the lumen of organelles along the secretory pathway. As part of that zinc ion:proton antiporter, contributes to zinc ion homeostasis within the early secretory pathway and regulates the activation and folding of enzymes like alkaline phosphatases and enzymes involved in phosphatidylinositol glycan anchor biosynthesis. This Danio rerio (Zebrafish) protein is Zinc transporter 6 (slc30a6).